Here is a 283-residue protein sequence, read N- to C-terminus: 4-diphosphocytidyl-2-C-methyl-D-erythritol kinase (283 aa).

Residue lysine 8 is part of the active site. Residue 90 to 100 (PIGSGLAGGSS) coordinates ATP. The active site involves aspartate 132.

The protein belongs to the GHMP kinase family. IspE subfamily.

The enzyme catalyses 4-CDP-2-C-methyl-D-erythritol + ATP = 4-CDP-2-C-methyl-D-erythritol 2-phosphate + ADP + H(+). The protein operates within isoprenoid biosynthesis; isopentenyl diphosphate biosynthesis via DXP pathway; isopentenyl diphosphate from 1-deoxy-D-xylulose 5-phosphate: step 3/6. Catalyzes the phosphorylation of the position 2 hydroxy group of 4-diphosphocytidyl-2C-methyl-D-erythritol. This Chlamydia muridarum (strain MoPn / Nigg) protein is 4-diphosphocytidyl-2-C-methyl-D-erythritol kinase.